The primary structure comprises 56 residues: Large ribosomal subunit protein bL32 (56 aa).

The tract at residues 1–21 (MAVQQNRKTRSRRGMRRSHDA) is disordered. Residues 7 to 16 (RKTRSRRGMR) are compositionally biased toward basic residues.

It belongs to the bacterial ribosomal protein bL32 family.

In Vibrio cholerae serotype O1 (strain ATCC 39541 / Classical Ogawa 395 / O395), this protein is Large ribosomal subunit protein bL32.